A 119-amino-acid chain; its full sequence is Holo-[acyl-carrier-protein] synthase (119 aa).

Residues aspartate 8 and glutamate 58 each contribute to the Mg(2+) site.

Belongs to the P-Pant transferase superfamily. AcpS family. Mg(2+) serves as cofactor.

It localises to the cytoplasm. The catalysed reaction is apo-[ACP] + CoA = holo-[ACP] + adenosine 3',5'-bisphosphate + H(+). In terms of biological role, transfers the 4'-phosphopantetheine moiety from coenzyme A to a Ser of acyl-carrier-protein. The sequence is that of Holo-[acyl-carrier-protein] synthase from Bacillus thuringiensis subsp. konkukian (strain 97-27).